A 506-amino-acid polypeptide reads, in one-letter code: Galactose/methyl galactoside import ATP-binding protein MglA (506 aa).

ABC transporter domains lie at 14–249 and 264–506; these read LEMS…VGRS and VILE…SLHL. 46–53 is a binding site for ATP; sequence GENGAGKS.

It belongs to the ABC transporter superfamily. Galactose/methyl galactoside importer (TC 3.A.1.2.3) family. The complex is composed of one ATP-binding protein (MglA), two transmembrane proteins (MglC) and a solute-binding protein (MglB).

Its subcellular location is the cell inner membrane. It catalyses the reaction D-galactose(out) + ATP + H2O = D-galactose(in) + ADP + phosphate + H(+). The enzyme catalyses methyl beta-D-galactoside(out) + ATP + H2O = methyl beta-D-galactoside(in) + ADP + phosphate + H(+). Functionally, part of the ABC transporter complex MglABC involved in galactose/methyl galactoside import. Responsible for energy coupling to the transport system. The protein is Galactose/methyl galactoside import ATP-binding protein MglA of Escherichia coli O157:H7.